The following is a 122-amino-acid chain: Vacuolar transporter chaperone complex subunit 1 (122 aa).

The Cytoplasmic portion of the chain corresponds to 1 to 32 (MSTQPLLQTTPGKRIALPVRVEPKVFFANERT). Residues 33–53 (FLSWLSFAVVLGGLSVGLLNF) form a helical membrane-spanning segment. Residues 54 to 59 (GDRIGK) lie on the Vacuolar side of the membrane. The chain crosses the membrane as a helical span at residues 60-80 (ISAGLFTIVAIGTMGYALGIY). Residues 81-101 (HWRASAIRRRGSGPYDDRLGP) are Cytoplasmic-facing. A helical membrane pass occupies residues 102-122 (TILCFVLLAAIITNFVLRMLF).

This sequence belongs to the VTC1 family. As to quaternary structure, the VTC core complex is an integral membrane heterooligomer composed of at least the catalytic subunit vtc4 and the accessory subunits vtc1 and vtc2. vtc1 is a small membrane protein without hydrophilic domain. Vtc2 and vtc4 are related and have 2 hydrophilic domains that face the cytosol, an N-terminal SPX domain and the central core domain. The central core in vtc4 is the catalytic domain. Vtc1 interacts with GTP-bound Ras-like cdc42, which is subsequently inactivated.

The protein resides in the vacuole membrane. Its function is as follows. Accessory subunit of the vacuolar transporter chaperone (VTC) complex. The VTC complex acts as a vacuolar polyphosphate polymerase that catalyzes the synthesis of inorganic polyphosphate (polyP) via transfer of phosphate from ATP to a growing polyP chain, releasing ADP. VTC exposes its catalytic domain vtc4 to the cytosol, where the growing polyP chain winds through a tunnel-shaped pocket, integrating cytoplasmic polymer synthesis with polyP membrane translocation. The VTC complex carries 9 vacuolar transmembrane domains, which are likely to constitute the translocation channel into the organelle lumen. PolyP synthesis is tightly coupled to its transport into the vacuole lumen, in order to avoid otherwise toxic intermediates in the cytosol, and it depends on the proton gradient across the membrane, formed by V-ATPase. Vtc1 contributes only 3 transmembrane domains to the complex. The VTC complex also plays a role in vacuolar membrane fusion. Involved in the control of cell polarity. This Schizosaccharomyces pombe (strain 972 / ATCC 24843) (Fission yeast) protein is Vacuolar transporter chaperone complex subunit 1.